The sequence spans 962 residues: Atromentin synthetase nps3 (962 aa).

Residues 55–469 (FISSSAHDSS…SGRIKDTVIV (415 aa)) form an adenylation (A) domain region. Residues 601–679 (VPATITETAF…DLAKYIDALV (79 aa)) form the Carrier domain. A thiolation and peptide carrier (T) domain region spans residues 606 to 676 (TETAFAKIFA…VLRDLAKYID (71 aa)). O-(pantetheine 4'-phosphoryl)serine is present on S638. Residues 702–805 (PIFFVHPGVG…VGLINIPPHI (104 aa)) are thioesterase (TE) domain.

It belongs to the ATP-dependent AMP-binding enzyme family.

Its pathway is secondary metabolite biosynthesis. Its function is as follows. An L-tyrosine:2-oxoglutarate aminotransferase (probably amt1) and atromentin synthetase nps3 catalyze consecutive steps to turn over L-tyrosine into atromentin, which represents the generic precursor molecule for the entire terphenylquinone and pulvinic acid family of pigments, which are widely distributed secondary metabolites in homobasidiomycetes. The first step catalyzed by the aminotransferase converts L-tyrosine in to 4-hydroxyphenylpyruvate (4-HPP). Adenylation of two 4-HPP monomers by the nps3 adenylation (A) domain, covalent tethering of the monomers as a thioester and oxoester onto the nps3 thiolation (T) and thioesterase (TE) domains, respectively, and symmetric C-C-bond formation between two monomers catalyzed by the nps3 TE domain leads to atromentin. Follow-up products of atromentin in S.lacrymans include atromentic acid, xerocomic acid, isoxerocomic acid and variegatic acid. The sequence is that of Atromentin synthetase nps3 (nps3) from Serpula lacrymans var. lacrymans (strain S7.9) (Dry rot fungus).